A 96-amino-acid polypeptide reads, in one-letter code: uncharacterized protein (96 aa).

In terms of domain architecture, HTH cro/C1-type spans 38–91; sequence IEQLRKGTGLKIDDFARVLGVSVAMVKEWESRRVKPSSAELKLMRLIQANPALS. A DNA-binding region (H-T-H motif) is located at residues 49 to 68; sequence IDDFARVLGVSVAMVKEWES.

This is an uncharacterized protein from Escherichia coli O157:H7.